A 468-amino-acid polypeptide reads, in one-letter code: Malate-2H(+)/Na(+)-lactate antiporter (468 aa).

12 helical membrane-spanning segments follow: residues Leu9–Phe29, Leu30–Ile50, Ala73–Val93, Leu96–Ile116, Ile136–Ile156, Leu192–Met212, Thr233–Met253, Met258–Met278, Ile309–Leu329, Leu357–Thr377, Leu405–Val425, and Phe428–Gly448.

This sequence belongs to the NhaC Na(+)/H(+) (TC 2.A.35) antiporter family.

The protein resides in the cell membrane. Its function is as follows. Couples proton uptake and Na(+) efflux to the substrate-product malate/lactate antiport, in an electroneutral malate-2H(+)/Na(+)-lactate exchange. Plays a role in supporting growth to high density on malate at reduced protonmotive force. The sequence is that of Malate-2H(+)/Na(+)-lactate antiporter (mleN) from Bacillus subtilis (strain 168).